A 342-amino-acid polypeptide reads, in one-letter code: Cytochrome f (342 aa).

Positions 1–28 (MKKQWIAGAFGLTAALAGLVSVPQSALA) are cleaved as a signal peptide. Residues cysteine 48, cysteine 51, and histidine 52 each coordinate heme. A helical membrane pass occupies residues 305–325 (VTWLVAFLAAAFICQLLLVLK).

The protein belongs to the cytochrome f family. As to quaternary structure, the 4 large subunits of the cytochrome b6-f complex are cytochrome b6, subunit IV (17 kDa polypeptide, PetD), cytochrome f and the Rieske protein, while the 4 small subunits are PetG, PetL, PetM and PetN. The complex functions as a dimer. Heme serves as cofactor.

The protein resides in the cell inner membrane. Its function is as follows. Component of the cytochrome b6-f complex, which mediates electron transfer between photosystem II (PSII) and photosystem I (PSI), cyclic electron flow around PSI, and state transitions. The sequence is that of Cytochrome f (petA) from Gloeobacter violaceus (strain ATCC 29082 / PCC 7421).